The primary structure comprises 318 residues: uncharacterized protein (318 aa).

The protein belongs to the NAD(P)-dependent epimerase/dehydratase family.

This is an uncharacterized protein from Staphylococcus haemolyticus (strain JCSC1435).